Consider the following 99-residue polypeptide: Ribosomal processing cysteine protease Prp (99 aa).

H16 acts as the Proton donor in catalysis. Catalysis depends on C28, which acts as the Nucleophile.

The protein belongs to the Prp family. As to quaternary structure, homodimer.

In terms of biological role, an essential cysteine protease that cleaves the N-terminus from ribosomal protein bL27. The sequence is that of Ribosomal processing cysteine protease Prp from Mycoplasma genitalium (strain ATCC 33530 / DSM 19775 / NCTC 10195 / G37) (Mycoplasmoides genitalium).